A 314-amino-acid polypeptide reads, in one-letter code: Short-chain dehydrogenase/reductase drtF (314 aa).

NADP(+) is bound by residues valine 26, lysine 50, aspartate 73, asparagine 100, tyrosine 185, and lysine 189. Tyrosine 185 acts as the Proton acceptor in catalysis. Lysine 189 acts as the Lowers pKa of active site Tyr in catalysis.

Belongs to the short-chain dehydrogenases/reductases (SDR) family.

Its pathway is secondary metabolite biosynthesis; terpenoid biosynthesis. Its function is as follows. Short-chain dehydrogenase/reductase; part of the gene cluster that mediates the biosynthesis of various drimane-type sesquiterpene esters, compounds that exhibit diverse biological activities and are widely present in eukaryotes. The pathway begins with the synthesis of the backbone drimenol by the terpene cyclase drtB using farnesyl pyrophosphate (FPP) as substrate. The cytochrome P450 monooxygenase drtD is then responsible for the hydroxylations at C-6, C-9 and C-12, as well as the oxidation of hydroxyl groups at C-6 and C-11 to a ketone and an aldehyde, respectively. Then, the biosynthesis can go in two directions, either the hydroxylated drimenol is further hydroxylated at C-2 and C-3 by an enzyme(s) not associated with the drt cluster, or the FAD-binding oxidoreductase drtC further oxidizes C-11 or C-12 to form the butyrolactone ring. DrtB, drtD and drtC are solely responsible for the formation of the different drimane structures observed during drimane sesquiterpenes biosynthesis. The polyketide synthase drtA synthesizes different lengths (C6 and C8) of PKS chains, which are then oxidized to varying degrees by the short-chain dehydrogenase drtF. Finally, these PKS chains are transferred onto drimane sesquiterpenes by the acyltransferase drtE, forming the sesquiterpene esters. In addition to the different fatty acyl-CoA chains produced by drtA, drtE is also able to use cinnamoyl-CoA as a substrate. The sequence is that of Short-chain dehydrogenase/reductase drtF from Aspergillus calidoustus.